A 327-amino-acid chain; its full sequence is Phenylalanine--tRNA ligase alpha subunit (327 aa).

Glutamate 252 contributes to the Mg(2+) binding site.

It belongs to the class-II aminoacyl-tRNA synthetase family. Phe-tRNA synthetase alpha subunit type 1 subfamily. As to quaternary structure, tetramer of two alpha and two beta subunits. Requires Mg(2+) as cofactor.

It is found in the cytoplasm. The enzyme catalyses tRNA(Phe) + L-phenylalanine + ATP = L-phenylalanyl-tRNA(Phe) + AMP + diphosphate + H(+). The chain is Phenylalanine--tRNA ligase alpha subunit from Vibrio vulnificus (strain CMCP6).